The sequence spans 101 residues: Small ribosomal subunit protein uS10 (101 aa).

This sequence belongs to the universal ribosomal protein uS10 family. Part of the 30S ribosomal subunit.

Its function is as follows. Involved in the binding of tRNA to the ribosomes. This Cytophaga hutchinsonii (strain ATCC 33406 / DSM 1761 / CIP 103989 / NBRC 15051 / NCIMB 9469 / D465) protein is Small ribosomal subunit protein uS10.